Here is a 124-residue protein sequence, read N- to C-terminus: Small ribosomal subunit protein uS13 (124 aa).

The span at 93-117 (KNLPVRGQRTRTNARTRKGPRKTVA) shows a compositional bias: basic residues. The segment at 93–124 (KNLPVRGQRTRTNARTRKGPRKTVANKKIESK) is disordered.

Belongs to the universal ribosomal protein uS13 family. Part of the 30S ribosomal subunit. Forms a loose heterodimer with protein S19. Forms two bridges to the 50S subunit in the 70S ribosome.

Functionally, located at the top of the head of the 30S subunit, it contacts several helices of the 16S rRNA. In the 70S ribosome it contacts the 23S rRNA (bridge B1a) and protein L5 of the 50S subunit (bridge B1b), connecting the 2 subunits; these bridges are implicated in subunit movement. Contacts the tRNAs in the A and P-sites. The sequence is that of Small ribosomal subunit protein uS13 from Mycoplasma genitalium (strain ATCC 33530 / DSM 19775 / NCTC 10195 / G37) (Mycoplasmoides genitalium).